Here is a 410-residue protein sequence, read N- to C-terminus: Transcription factor PHYTOCHROME INTERACTING FACTOR-LIKE 13 (410 aa).

Residues 82–92 (AAAAAGPSSHH) are compositionally biased toward low complexity. Disordered regions lie at residues 82 to 110 (AAAA…MRSG) and 137 to 225 (CRDA…AEVH). A compositionally biased stretch (pro residues) spans 93 to 104 (APPPDLPPPAAR). Residues 187–197 (GREDSDSRSED) are compositionally biased toward basic and acidic residues. A compositionally biased stretch (basic residues) spans 209–219 (SSRRYGSKRRT). Positions 220-233 (RAAEVHNLSERRRR) are basic motif. Positions 220–269 (RAAEVHNLSERRRRDRINEKMRALQELIPHCNKTDKASILDEAIEYLKSL) constitute a bHLH domain. The tract at residues 234–269 (DRINEKMRALQELIPHCNKTDKASILDEAIEYLKSL) is helix-loop-helix motif. Residues 357-410 (PFLHPDGWQTVPPQVSGPYASGPQVAQQNQIPKASASTVLPNSGAEQPPTSDGI) form a disordered region. Polar residues predominate over residues 380–410 (QVAQQNQIPKASASTVLPNSGAEQPPTSDGI).

Belongs to the bHLH protein family. As to quaternary structure, interacts with PRR1. Interacts with LF. As to expression, highly expressed in the node portions of the stem. Expressed in the leaves and the basal part of shoots.

The protein resides in the nucleus. Transcription factor that may act as negative regulator of phyB-dependent light signal transduction. Transcription activator that acts as a positive regulator of internode elongation. May function via regulation of cell wall-related genes. May play a role in a drought-associated growth-restriction mechanism in response to drought stress. The sequence is that of Transcription factor PHYTOCHROME INTERACTING FACTOR-LIKE 13 from Oryza sativa subsp. japonica (Rice).